The sequence spans 368 residues: MEPLFPASPLTTWNTSSVVPSGSGDENGTLAGLGPSPGARAVVVPVLYLLVCAVGLGGNTLVIYVVLRHAKMKTVTNIYILNLAVADVLLMLGLPFVATQNAISYWPFGPVLCRLVMTLDGINQFTSIFCLTVMSVDRYLAVVHPIRSARWRRPRVAKLASAAVWAFSLVMSLPLVVFADIQEGWNTCNLSWPEPVGLWGAVFIIYTSVLGFFGPLLVICLCYLLIVVKLKASGVRVGSTRRRSERKVTRMVVVVVLVFAGCWLPFFIVNIVNLAFALPEEPASAGAYFFVVVLSYANSCANPLLYGFLSDNFRQSFRKVLCLRKGYGAGAEDADATEPQPGPSSRLQEAMMPVRSCKANGLMQTSKL.

At 1–45 the chain is on the extracellular side; it reads MEPLFPASPLTTWNTSSVVPSGSGDENGTLAGLGPSPGARAVVVP. N-linked (GlcNAc...) asparagine glycans are attached at residues asparagine 14 and asparagine 27. A helical membrane pass occupies residues 46-66; the sequence is VLYLLVCAVGLGGNTLVIYVV. Over 67-77 the chain is Cytoplasmic; sequence LRHAKMKTVTN. Residues 78-98 form a helical membrane-spanning segment; that stretch reads IYILNLAVADVLLMLGLPFVA. At 99–115 the chain is on the extracellular side; the sequence is TQNAISYWPFGPVLCRL. Cysteine 113 and cysteine 188 are disulfide-bonded. The helical transmembrane segment at 116 to 136 threads the bilayer; that stretch reads VMTLDGINQFTSIFCLTVMSV. Topologically, residues 137 to 158 are cytoplasmic; it reads DRYLAVVHPIRSARWRRPRVAK. A helical transmembrane segment spans residues 159 to 179; sequence LASAAVWAFSLVMSLPLVVFA. The Extracellular portion of the chain corresponds to 180–207; that stretch reads DIQEGWNTCNLSWPEPVGLWGAVFIIYT. An N-linked (GlcNAc...) asparagine glycan is attached at asparagine 189. A helical transmembrane segment spans residues 208-228; sequence SVLGFFGPLLVICLCYLLIVV. Over 229–251 the chain is Cytoplasmic; it reads KLKASGVRVGSTRRRSERKVTRM. A helical transmembrane segment spans residues 252–272; that stretch reads VVVVVLVFAGCWLPFFIVNIV. The Extracellular portion of the chain corresponds to 273–286; that stretch reads NLAFALPEEPASAG. Residues 287–309 traverse the membrane as a helical segment; sequence AYFFVVVLSYANSCANPLLYGFL. Residues 310-368 lie on the Cytoplasmic side of the membrane; it reads SDNFRQSFRKVLCLRKGYGAGAEDADATEPQPGPSSRLQEAMMPVRSCKANGLMQTSKL. Cysteine 322 carries the S-palmitoyl cysteine; by ZDHHC5 lipid modification.

Belongs to the G-protein coupled receptor 1 family. Heterodimer with SSTR2. Heterodimerization with SSTR2 increases cell growth inhibition activity of SSTR2. In terms of processing, palmitoylated by ZDHHC5, but not ZDHHC3, nor ZDHHC8. Palmitoylation creates an additional intracellular loop which is thought to be important for efficient coupling to G-proteins and may target the protein to lipid rafts.

The protein localises to the cell membrane. In terms of biological role, receptor for somatostatin 28 and to a lesser extent for somatostatin-14. The activity of this receptor is mediated by G proteins which inhibit adenylyl cyclase. Increases cell growth inhibition activity of SSTR2 following heterodimerization. This Bos taurus (Bovine) protein is Somatostatin receptor type 5 (SSTR5).